The chain runs to 167 residues: Zymogen granule membrane protein 16 (167 aa).

The signal sequence occupies residues 1–16 (MLAVALLVLLCASASA). The Jacalin-type lectin domain maps to 24-159 (SSYSGEYGGK…IDSISLHWDT (136 aa)).

Belongs to the jacalin lectin family.

The protein localises to the secreted. It is found in the extracellular space. It localises to the extracellular matrix. Its subcellular location is the zymogen granule lumen. The protein resides in the golgi apparatus lumen. In terms of biological role, may play a role in protein trafficking. May act as a linker molecule between the submembranous matrix on the luminal side of zymogen granule membrane (ZGM) and aggregated secretory proteins during granule formation in the TGN. The polypeptide is Zymogen granule membrane protein 16 (Zg16) (Mus musculus (Mouse)).